We begin with the raw amino-acid sequence, 1254 residues long: MELAAWCGWGLLLALLSPGASGTQVCTGTDMKLRLPASPETHLDIVRHLYQGCQVVQGNLELTYLPANATLSFLQDIQEVQGYMLIAHSQVRHVPLQRLRIVRGTQLFEDKYALAVLDNRDPLDNVTTATGRTPEGLRELQLRSLTEILKGGVLIRGNPQLCYQDTVLWKDVFRKNNQLAPVDIDTNRSRACPPCAPACKDNHCWGASPEDCQTLTGTIAPRAVPAARARLPTDCCHEQCAAGCTGPKHSDCLACLHFNHSGICELHCPALVTYNTDTFESMPNPEGRYTFGASCVTTCPYNYLSTEVGSCTLVCPLNNQEVTAEDGTQRCEKCSKSCARVCYGLGMEHLRGARAITSANIQEFAGCKKIFGSLAFLPESFDGNPSSGIAPLTPEQLQVFETLEEITGYLYISAWPDSLHDLSVFQNLRVIRGRVLHDGAYSLALQGLGIRWLGLRSLRELGSGLVLIHRNTHLCFVHTVPWDQLFRNPHQALLHSGNPSEEECGLKDFACYPLCAHGHCWGPGPTQCVNCSHFLRGQECVKECRVWKGLPREYVNGKHCLPCHPECQPQNSTETCTGSEADQCTACPHYKDSPFCVARCPSGVKPDLSYMPIWKYPDEEGMCQPCPINCTHSCVDLDERGCPAEQRASPATSIIATVVGILLFLVIGVVVGILIKRRRQKIRKYTMRRLLQETELVEPLTPSGAMPNQAQMRILKETELRKVKVLGSGAFGTVYKGIWIPDGENVKIPVAIKVLRENTSPKANKEILDEAYVMAGLGSPYVSRLLGICLTSTVQLVTQLMPYGCLLDHVREHRGRLGSQDLLNWCVQIAKGMSYLEDVRLVHRDLAARNVLVKSPNHVKITDFGLARLLDIDETEYHADGGKVPIKWIALESILRRRFTHQSDVWSYGVTVWELMTFGAKPYDGIPAREIPDLLEKGERLPQPPICTIDVYMIMVKCWMIDSECRPRFRELVSEFSRMARDPQRFVVIQNEDLGPSSPLDSTFYRSLLEDDDMGDLVDAEEYLVPQQGFFFPDPAPGAGSTAHRRHRSSSTRSGGGELTLGMEPSGEEPPRSPLAPSEGAGSDVFEGELGMGATKGPQSISPRDLSPLQRYSEDPTLPLPTETDGYVAPLACSPQPEYVNQPEVRPQPPLTPEGPLPPVRPAGATLERPKTLSPGKNGVVKDVFTFGGAVENPEYLVPRGGSASQPHPPALCPAFDNLYYWDQDPSERGSPPNTFEGTPTAENPEYLGLDVPV.

The signal sequence occupies residues 1 to 22 (MELAAWCGWGLLLALLSPGASG). Over 23 to 652 (TQVCTGTDMK…PAEQRASPAT (630 aa)) the chain is Extracellular. A disulfide bridge connects residues Cys26 and Cys53. Asn68, Asn125, and Asn187 each carry an N-linked (GlcNAc...) asparagine glycan. Disulfide bonds link Cys162–Cys192, Cys195–Cys204, Cys199–Cys212, Cys236–Cys244, Cys240–Cys252, Cys255–Cys264, Cys268–Cys295, Cys299–Cys311, Cys315–Cys331, Cys334–Cys338, Cys342–Cys367, Cys475–Cys504, Cys511–Cys520, and Cys515–Cys528. N-linked (GlcNAc...) asparagine glycosylation occurs at Asn259. The N-linked (GlcNAc...) asparagine glycan is linked to Asn530. Cystine bridges form between Cys531–Cys540, Cys544–Cys560, Cys563–Cys576, Cys567–Cys584, Cys587–Cys596, Cys600–Cys623, Cys626–Cys634, and Cys630–Cys642. Asn571 carries N-linked (GlcNAc...) asparagine glycosylation. Residue Asn629 is glycosylated (N-linked (GlcNAc...) asparagine). A helical transmembrane segment spans residues 653-675 (SIIATVVGILLFLVIGVVVGILI). The interval 676 to 689 (KRRRQKIRKYTMRR) is required for interaction with KPNB1 and EEA1. Positions 676–689 (KRRRQKIRKYTMRR) match the Nuclear localization signal motif. At 676 to 1254 (KRRRQKIRKY…PEYLGLDVPV (579 aa)) the chain is on the cytoplasmic side. Positions 720 to 987 (LRKVKVLGSG…RMARDPQRFV (268 aa)) constitute a Protein kinase domain. Residues 726 to 734 (LGSGAFGTV) and Lys753 each bind ATP. Asp845 serves as the catalytic Proton acceptor. At Tyr877 the chain carries Phosphotyrosine. Disordered regions lie at residues 1029–1116 (GFFF…SEDP) and 1133–1179 (CSPQ…GKNG). 4 positions are modified to phosphoserine: Ser1054, Ser1078, Ser1083, and Ser1107. Tyr1112 carries the post-translational modification Phosphotyrosine. At Tyr1139 the chain carries Phosphotyrosine; by autocatalysis. A compositionally biased stretch (pro residues) spans 1146 to 1161 (RPQPPLTPEGPLPPVR). Residue Thr1166 is modified to Phosphothreonine. Residues 1195 to 1197 (EYL) are interaction with PIK3C2B. The residue at position 1196 (Tyr1196) is a Phosphotyrosine. The segment at 1223–1254 (DQDPSERGSPPNTFEGTPTAENPEYLGLDVPV) is disordered. A compositionally biased stretch (polar residues) spans 1232–1242 (PPNTFEGTPTA). Phosphotyrosine; by autocatalysis is present on Tyr1247.

Belongs to the protein kinase superfamily. Tyr protein kinase family. EGF receptor subfamily. As to quaternary structure, homodimer. Heterodimer with EGFR, ERBB3 and ERBB4. Part of a complex with EGFR and either PIK3C2A or PIK3C2B. May interact with PIK3C2B when phosphorylated on Tyr-1196. Interacts with PRKCABP and PLXNB1. Interacts (when phosphorylated on Tyr-1247) with MEMO. Interacts with MUC1. Interacts (when phosphorylated on Tyr-1139) with GRB7 (via SH2 domain). Interacts (when phosphorylated on Tyr-1247) with ERBIN. Interacts with SRC, KPNB1, RANBP2, EEA1, CRM1, CLTC, PTK6, RPA194, MYOC and ACTB. Interacts (preferentially with the tyrosine phosphorylated form) with CPNE3; this interaction occurs at the cell membrane and is increased in a growth factor heregulin-dependent manner. Interacts with HSP90AA1 and HSP90AB1 in an ATP-dependent manner; the interaction suppresses ERBB2 kinase activity. Interacts with SORL1; this interaction regulates ERBB2 subcellular distribution by promoting its recycling after internalization from endosomes back to the plasma membrane, hence stimulates ERBB2-mediated signaling. Interacts with SH3BGRL. Interacts with ROR1. Autophosphorylated. Autophosphorylation occurs in trans, i.e. one subunit of the dimeric receptor phosphorylates tyrosine residues on the other subunit. Ligand-binding increases phosphorylation on tyrosine residues. Signaling via SEMA4C promotes phosphorylation at Tyr-1247. Dephosphorylated by PTPN12.

The protein resides in the cell membrane. It is found in the cell projection. The protein localises to the ruffle membrane. Its subcellular location is the early endosome. It localises to the cytoplasm. The protein resides in the perinuclear region. It is found in the nucleus. The catalysed reaction is L-tyrosyl-[protein] + ATP = O-phospho-L-tyrosyl-[protein] + ADP + H(+). In terms of biological role, protein tyrosine kinase that is part of several cell surface receptor complexes, but that apparently needs a coreceptor for ligand binding. Essential component of a neuregulin-receptor complex, although neuregulins do not interact with it alone. GP30 is a potential ligand for this receptor. Regulates outgrowth and stabilization of peripheral microtubules (MTs). Upon ERBB2 activation, the MEMO1-RHOA-DIAPH1 signaling pathway elicits the phosphorylation and thus the inhibition of GSK3B at cell membrane. This prevents the phosphorylation of APC and CLASP2, allowing its association with the cell membrane. In turn, membrane-bound APC allows the localization of MACF1 to the cell membrane, which is required for microtubule capture and stabilization. In the nucleus is involved in transcriptional regulation. Associates with the 5'-TCAAATTC-3' sequence in the PTGS2/COX-2 promoter and activates its transcription. Implicated in transcriptional activation of CDKN1A; the function involves STAT3 and SRC. Involved in the transcription of rRNA genes by RNA Pol I and enhances protein synthesis and cell growth. This Mesocricetus auratus (Golden hamster) protein is Receptor tyrosine-protein kinase erbB-2 (ERBB2).